The sequence spans 88 residues: MKCKRLNEVLELLQSYWSKDSDLSLMEILQKIANESGFQKPLNELTDEVIIYQLKMDGTDKYEPIPGLKKDYEEDFKTALLRARGIIK.

It to E.coli YihD.

This is an uncharacterized protein from Haemophilus influenzae (strain ATCC 51907 / DSM 11121 / KW20 / Rd).